The sequence spans 69 residues: UPF0270 protein VCM66_2532 (69 aa).

The protein belongs to the UPF0270 family.

The polypeptide is UPF0270 protein VCM66_2532 (Vibrio cholerae serotype O1 (strain M66-2)).